We begin with the raw amino-acid sequence, 140 residues long: Large ribosomal subunit protein uL11 (140 aa).

Belongs to the universal ribosomal protein uL11 family. In terms of assembly, part of the ribosomal stalk of the 50S ribosomal subunit. Interacts with L10 and the large rRNA to form the base of the stalk. L10 forms an elongated spine to which L12 dimers bind in a sequential fashion forming a multimeric L10(L12)X complex. One or more lysine residues are methylated.

In terms of biological role, forms part of the ribosomal stalk which helps the ribosome interact with GTP-bound translation factors. The chain is Large ribosomal subunit protein uL11 from Staphylococcus saprophyticus subsp. saprophyticus (strain ATCC 15305 / DSM 20229 / NCIMB 8711 / NCTC 7292 / S-41).